The primary structure comprises 249 residues: 2-C-methyl-D-erythritol 4-phosphate cytidylyltransferase (249 aa).

It belongs to the IspD/TarI cytidylyltransferase family. IspD subfamily.

It carries out the reaction 2-C-methyl-D-erythritol 4-phosphate + CTP + H(+) = 4-CDP-2-C-methyl-D-erythritol + diphosphate. It participates in isoprenoid biosynthesis; isopentenyl diphosphate biosynthesis via DXP pathway; isopentenyl diphosphate from 1-deoxy-D-xylulose 5-phosphate: step 2/6. Functionally, catalyzes the formation of 4-diphosphocytidyl-2-C-methyl-D-erythritol from CTP and 2-C-methyl-D-erythritol 4-phosphate (MEP). This chain is 2-C-methyl-D-erythritol 4-phosphate cytidylyltransferase, found in Chromohalobacter salexigens (strain ATCC BAA-138 / DSM 3043 / CIP 106854 / NCIMB 13768 / 1H11).